Consider the following 352-residue polypeptide: Delta(7)-sterol 5(6)-desaturas erg3A (352 aa).

N39 carries an N-linked (GlcNAc...) asparagine glycan. Transmembrane regions (helical) follow at residues 82–102 (FLSF…ISAT), 128–147 (IAQT…PFLV), and 167–187 (YYSI…IYWI). Residues 174–299 (PLFIAFTDFC…FTTLWDRLGG (126 aa)) form the Fatty acid hydroxylase domain. Residues 188–192 (HRGLH) carry the Histidine box-1 motif. A Histidine box-2 motif is present at residues 201-205 (HKPHH). Residues 231–251 (HVFPFIFPLQKLAYVFLFGFI) form a helical membrane-spanning segment. Residues 276–280 (HTMHH) carry the Histidine box-3 motif.

The protein belongs to the sterol desaturase family. Fe cation serves as cofactor.

It is found in the endoplasmic reticulum membrane. In terms of biological role, delta(7)-sterol 5(6)-desaturase; part of the third module of ergosterol biosynthesis pathway that includes the late steps of the pathway. Erg3A is a minor delta(7)-sterol 5(6)-desaturase within the ergosterol pathway, erg3B being the major one. The third module or late pathway involves the ergosterol synthesis itself through consecutive reactions that mainly occur in the endoplasmic reticulum (ER) membrane. Firstly, the squalene synthase erg9 catalyzes the condensation of 2 farnesyl pyrophosphate moieties to form squalene, which is the precursor of all steroids. Squalene synthase is crucial for balancing the incorporation of farnesyl diphosphate (FPP) into sterol and nonsterol isoprene synthesis. Secondly, squalene is converted into lanosterol by the consecutive action of the squalene epoxidase erg1 and the lanosterol synthase erg7. Then, the delta(24)-sterol C-methyltransferase erg6 methylates lanosterol at C-24 to produce eburicol. Eburicol is the substrate of the sterol 14-alpha demethylase encoded by cyp51A and cyp51B, to yield 4,4,24-trimethyl ergosta-8,14,24(28)-trienol. The C-14 reductase erg24 then reduces the C14=C15 double bond which leads to 4,4-dimethylfecosterol. A sequence of further demethylations at C-4, involving the C-4 demethylation complex containing the C-4 methylsterol oxidases erg25A or erg25B, the sterol-4-alpha-carboxylate 3-dehydrogenase erg26 and the 3-keto-steroid reductase erg27, leads to the production of fecosterol via 4-methylfecosterol. The C-8 sterol isomerase erg2 then catalyzes the reaction which results in unsaturation at C-7 in the B ring of sterols and thus converts fecosterol to episterol. The sterol-C5-desaturase erg3B then catalyzes the introduction of a C-5 double bond in the B ring to produce 5-dehydroepisterol. The 2 other sterol-C5-desaturases, erg3A and erg3C, seem to be less important in ergosterol biosynthesis. The C-22 sterol desaturase erg5 further converts 5-dehydroepisterol into ergosta-5,7,22,24(28)-tetraen-3beta-ol by forming the C-22(23) double bond in the sterol side chain. Finally, ergosta-5,7,22,24(28)-tetraen-3beta-ol is substrate of the C-24(28) sterol reductases erg4A and erg4B to produce ergosterol. Possible alternative sterol biosynthetic pathways might exist from fecosterol to ergosterol, depending on the activities of the erg3 isoforms. This Aspergillus fumigatus (strain ATCC MYA-4609 / CBS 101355 / FGSC A1100 / Af293) (Neosartorya fumigata) protein is Delta(7)-sterol 5(6)-desaturas erg3A.